The following is a 220-amino-acid chain: Ribosomal RNA small subunit methyltransferase Nep1 (220 aa).

S-adenosyl-L-methionine is bound by residues Gly-178, Gly-183, and 196–201; that span reads IYKEPL.

It belongs to the class IV-like SAM-binding methyltransferase superfamily. RNA methyltransferase NEP1 family. As to quaternary structure, homodimer.

The enzyme catalyses a pseudouridine in rRNA + S-adenosyl-L-methionine = an N(1)-methylpseudouridine in rRNA + S-adenosyl-L-homocysteine + H(+). Its function is as follows. Methyltransferase involved in ribosomal biogenesis. Specifically catalyzes the N1-methylation of the pseudouridine corresponding to position 914 in M.jannaschii 16S rRNA. The protein is Ribosomal RNA small subunit methyltransferase Nep1 of Thermococcus sibiricus (strain DSM 12597 / MM 739).